The sequence spans 497 residues: Inactive metallocarboxypeptidase ecm14 (497 aa).

The signal sequence occupies residues 1–28 (MAYNKSLKSLVFILLASQIVFVLFLCYG). Positions 29 to 148 (KSSRELGVKW…TLFESIVPDT (120 aa)) are excised as a propeptide. Residues 182–492 (SYQNLESINS…AMILYYGEFI (311 aa)) form the Peptidase M14 domain. Zn(2+) contacts are provided by His248 and Glu251. Residues 248–251 (HARE) and 323–324 (DA) each bind substrate. Residues Cys317 and Cys337 are joined by a disulfide bond. Zn(2+) is bound at residue His377. Position 378-379 (378-379 (SY)) interacts with substrate.

This sequence belongs to the peptidase M14 family. Zn(2+) serves as cofactor.

Its subcellular location is the endoplasmic reticulum. The protein resides in the secreted. Its function is as follows. Inactive carboxypeptidase that may play a role in cell wall organization and biogenesis. This is Inactive metallocarboxypeptidase ecm14 from Schizosaccharomyces pombe (strain 972 / ATCC 24843) (Fission yeast).